Consider the following 398-residue polypeptide: Argininosuccinate synthase (398 aa).

Ala8–Ser16 contributes to the ATP binding site. Tyr87 serves as a coordination point for L-citrulline. Position 117 (Gly117) interacts with ATP. Positions 119, 123, and 124 each coordinate L-aspartate. Asn123 is a binding site for L-citrulline. L-citrulline-binding residues include Arg127, Ser175, Glu260, and Tyr272.

The protein belongs to the argininosuccinate synthase family. Type 1 subfamily. In terms of assembly, homotetramer.

It localises to the cytoplasm. It catalyses the reaction L-citrulline + L-aspartate + ATP = 2-(N(omega)-L-arginino)succinate + AMP + diphosphate + H(+). Its pathway is amino-acid biosynthesis; L-arginine biosynthesis; L-arginine from L-ornithine and carbamoyl phosphate: step 2/3. The protein is Argininosuccinate synthase of Mycobacterium avium (strain 104).